The primary structure comprises 551 residues: Cytochrome P450 monooxygenase FCK2 (551 aa).

3 consecutive transmembrane segments (helical) span residues 8–28, 35–55, and 69–89; these read FDPANYSLFFVLGVLTHVFIF, LHVFNILQAFAVLESSLVYIV, and VTTISSCFTLSTLMGLLISIL. Asn258 is a glycosylation site (N-linked (GlcNAc...) asparagine). Heme is bound at residue Cys493.

This sequence belongs to the cytochrome P450 family. It depends on heme as a cofactor.

It localises to the membrane. The protein operates within secondary metabolite biosynthesis. In terms of biological role, cytochrome P450 monooxygenase; part of the gene cluster that mediates the biosynthesis of cytokinins such as fusatin, fusatinic acids or 8-oxofusatin, known for their growth promoting and anti-senescence activities toward host plants. FCK1 is a bifunctional enzyme that performs the first steps in the biosynthesis of Fusarium cytokinins. It first condenses adenosine monophosphate (AMP) with dimethylallyl diphosphate (DMAPP) to yield isoprenyl adenosine monophosphate. It then catalyzes the removal of the phosphoribose to produce isopentenylaldehyde. The cytochrome P450 monooxygenase then converts isopentenylaldehyde to trans-zeatin. A condensation step converts trans-zeatin to fusatin which is further modified to produce fusatinic acid. The mechanism for oxidation of fusatin to fusatinic acid remains unknown. 8-oxofusatin could be produced through several pathways, via direct oxygenation of fusatin, or via the 8-oxo-pentenyladenine intermediate which itself must arise from either the prenylation of 8-oxo-AMP by FCK1 and/or oxygenation of isopentenylaldehyde. Both the FCK3 and FCK4 enzymes act downstream of the identified cytokinins to produce yet unidentified compounds. This chain is Cytochrome P450 monooxygenase FCK2, found in Fusarium pseudograminearum (strain CS3096) (Wheat and barley crown-rot fungus).